The following is a 317-amino-acid chain: Beta-ketoacyl-[acyl-carrier-protein] synthase III (317 aa).

Catalysis depends on residues Cys112 and His244. The interval 245–249 is ACP-binding; the sequence is QANIR. Residue Asn274 is part of the active site.

This sequence belongs to the thiolase-like superfamily. FabH family. As to quaternary structure, homodimer.

The protein localises to the cytoplasm. It carries out the reaction malonyl-[ACP] + acetyl-CoA + H(+) = 3-oxobutanoyl-[ACP] + CO2 + CoA. It participates in lipid metabolism; fatty acid biosynthesis. Catalyzes the condensation reaction of fatty acid synthesis by the addition to an acyl acceptor of two carbons from malonyl-ACP. Catalyzes the first condensation reaction which initiates fatty acid synthesis and may therefore play a role in governing the total rate of fatty acid production. Possesses both acetoacetyl-ACP synthase and acetyl transacylase activities. Its substrate specificity determines the biosynthesis of branched-chain and/or straight-chain of fatty acids. In Rickettsia akari (strain Hartford), this protein is Beta-ketoacyl-[acyl-carrier-protein] synthase III.